The following is a 491-amino-acid chain: MTLRSDVLAYIPSPPQGVWHIGPIPLRAYALCIILGIVVAIWWGERRWQQRGGREGTVLDVAMFAVPFGLIGGRAYHVATDWRKYFGEGGNPVEALYIWQGGLGIWGAVFLGGIGAWIACRIYRIPLPAFGDAIAPPILLAQAIGRLGNWFNQELYGRETTLPWGLEIYPRFDAAGDPDPMNGISNGVVEKIVHPTFLYELLWNVLVVIALVQLDKRFRIGHGRLFALYVAGYSFGRFFVELMRDDEATLVAGIRINNFTSALVFLAAIAYFVFATKGREAPERLQPGGTTRPWPWQLAALRAAGVAANGPAEPGATASTATDTDGDAKDTPPSDAAATGGQGTAAKGDRGTADAADTAKDASATDSASNSASATDSDFGETAGSSDDADRAAAVKAASGATAAEKSAADKESAAGEAAADTSAADQPAADKSGSAKSAADKSAGKSGAGRGNESESTRDNESTSAGTAASATGSAGAGATDRVDSGENDA.

The next 3 helical transmembrane spans lie at Ile24 to Gly44, Val58 to Val78, and Ile98 to Ile118. Arg146 is an a 1,2-diacyl-sn-glycero-3-phospho-(1'-sn-glycerol) binding site. A run of 2 helical transmembrane segments spans residues Ile192–Val212 and Ile256–Thr276. The segment covering Asn309–Asp323 has biased composition (low complexity). Residues Asn309–Ala491 are disordered. Positions Lys347 to Lys360 are enriched in basic and acidic residues. Composition is skewed to low complexity over residues Asp361–Asp387, Ala394–Lys406, and Ala415–Ser438. Over residues Asn453–Glu462 the composition is skewed to basic and acidic residues. The span at Ser463–Thr481 shows a compositional bias: low complexity. A compositionally biased stretch (basic and acidic residues) spans Asp482–Ala491.

Belongs to the Lgt family.

The protein resides in the cell membrane. The enzyme catalyses L-cysteinyl-[prolipoprotein] + a 1,2-diacyl-sn-glycero-3-phospho-(1'-sn-glycerol) = an S-1,2-diacyl-sn-glyceryl-L-cysteinyl-[prolipoprotein] + sn-glycerol 1-phosphate + H(+). The protein operates within protein modification; lipoprotein biosynthesis (diacylglyceryl transfer). Catalyzes the transfer of the diacylglyceryl group from phosphatidylglycerol to the sulfhydryl group of the N-terminal cysteine of a prolipoprotein, the first step in the formation of mature lipoproteins. In Nocardia farcinica (strain IFM 10152), this protein is Phosphatidylglycerol--prolipoprotein diacylglyceryl transferase.